A 235-amino-acid polypeptide reads, in one-letter code: Probable GTP-binding protein EngB (235 aa).

One can recognise an EngB-type G domain in the interval 23 to 219 (QVPEIAFAGR…NDKIIELLGL (197 aa)). Residues 31–38 (GRSNAGKS), 58–62 (GRTQH), 92–95 (DLPG), 159–162 (TKSD), and 193–200 (FTAQMFSA) contribute to the GTP site. Residues Ser-38 and Thr-60 each contribute to the Mg(2+) site.

This sequence belongs to the TRAFAC class TrmE-Era-EngA-EngB-Septin-like GTPase superfamily. EngB GTPase family. Mg(2+) is required as a cofactor.

Necessary for normal cell division and for the maintenance of normal septation. This chain is Probable GTP-binding protein EngB, found in Janthinobacterium sp. (strain Marseille) (Minibacterium massiliensis).